Here is a 3071-residue protein sequence, read N- to C-terminus: Intermembrane lipid transfer protein vps1301 (3071 aa).

The Chorein N-terminal domain maps to 2 to 115 (LEGLVAGLLN…QQALKQEQLD (114 aa)). One can recognise an SHR-BD domain in the interval 2143–2415 (HIEIFSPYII…KYSWDYPCCA (273 aa)).

Belongs to the VPS13 family.

It localises to the golgi apparatus. The protein localises to the trans-Golgi network. In terms of biological role, mediates the transfer of lipids between membranes at organelle contact sites. May play a role in mitochondrial lipid homeostasis, Golgi vesicle transport, reticulophagy, actin cytoskeleton organization and formation of the forespore membrane. This Schizosaccharomyces pombe (strain 972 / ATCC 24843) (Fission yeast) protein is Intermembrane lipid transfer protein vps1301.